The sequence spans 299 residues: F-actin-capping protein subunit alpha-3 (299 aa).

Ser290 is subject to Phosphoserine.

This sequence belongs to the F-actin-capping protein alpha subunit family. As to quaternary structure, component of the F-actin capping complex, composed of a heterodimer of an alpha and a beta subunit. Component of the WASH complex, composed of F-actin-capping protein subunit alpha (CAPZA1, CAPZA2 or CAPZA3), F-actin-capping protein subunit beta (CAPZB), WASH (WASHC1, WASH2P, WASH3P, WASH4P, WASH5P or WASH6P), WASHC2 (WASHC2A or WASHC2C), WASHC3, WASHC4 and WASHC5. Expressed exclusively in testis and sperm. Highest expression is found in the neck region of ejaculated sperm with lower levels found in the tail and postacrosome region.

It is found in the cytoplasm. The protein resides in the cytoskeleton. F-actin-capping proteins bind in a Ca(2+)-independent manner to the fast growing ends of actin filaments (barbed end) thereby blocking the exchange of subunits at these ends. Unlike other capping proteins (such as gelsolin and severin), these proteins do not sever actin filaments. May play a role in the morphogenesis of spermatid. The polypeptide is F-actin-capping protein subunit alpha-3 (CAPZA3) (Homo sapiens (Human)).